The chain runs to 65 residues: Large ribosomal subunit protein bL35 (65 aa).

It belongs to the bacterial ribosomal protein bL35 family.

In Karelsulcia muelleri (strain GWSS) (Sulcia muelleri), this protein is Large ribosomal subunit protein bL35.